A 159-amino-acid polypeptide reads, in one-letter code: Ribosomal RNA large subunit methyltransferase H (159 aa).

S-adenosyl-L-methionine-binding positions include L76, G108, and 127-132; that span reads FSKMTF.

It belongs to the RNA methyltransferase RlmH family. In terms of assembly, homodimer.

Its subcellular location is the cytoplasm. The catalysed reaction is pseudouridine(1915) in 23S rRNA + S-adenosyl-L-methionine = N(3)-methylpseudouridine(1915) in 23S rRNA + S-adenosyl-L-homocysteine + H(+). Its function is as follows. Specifically methylates the pseudouridine at position 1915 (m3Psi1915) in 23S rRNA. The sequence is that of Ribosomal RNA large subunit methyltransferase H from Clostridium botulinum (strain Kyoto / Type A2).